The primary structure comprises 125 residues: Large ribosomal subunit protein bL12 (125 aa).

The protein belongs to the bacterial ribosomal protein bL12 family. As to quaternary structure, homodimer. Part of the ribosomal stalk of the 50S ribosomal subunit. Forms a multimeric L10(L12)X complex, where L10 forms an elongated spine to which 2 to 4 L12 dimers bind in a sequential fashion. Binds GTP-bound translation factors.

Forms part of the ribosomal stalk which helps the ribosome interact with GTP-bound translation factors. Is thus essential for accurate translation. The protein is Large ribosomal subunit protein bL12 of Anaeromyxobacter sp. (strain Fw109-5).